We begin with the raw amino-acid sequence, 672 residues long: Transcription factor tau 91 kDa subunit (672 aa).

Residues 1-158 are required for DNA-binding; it reads MAVIPAKKRG…SLGQKGRPIR (158 aa). A DNA-binding region (a.T hook) is located at residues 6-18; it reads AKKRGRPRKSVVA. 2 disordered regions span residues 24 to 45 and 67 to 156; these read SLASPVSENSGSKRPRRNASKK and VNNV…KGRP. Positions 71-100 are enriched in acidic residues; that stretch reads DDTDDDDFVLNDEGDGEESDNVEIEFENEL. The tract at residues 159–672 is sufficient for interaction with TFC8; sequence LLKDLSSARD…AGLLTLEYLS (514 aa). Cysteines 375 and 383 form a disulfide.

As to quaternary structure, heterodimer with TFC8. Component of the TFIIIC complex composed of TFC1, TFC3, TFC4, TFC6, TFC7 and TFC8. The subunits are organized in two globular domains, tauA and tauB, connected by a proteolysis-sensitive and flexible linker. Interacts with TFC1, TFC3, TFC4 and directly with TFC8.

Its subcellular location is the nucleus. Functionally, TFIIIC mediates tRNA and 5S RNA gene activation by binding to intragenic promoter elements. Upstream of the transcription start site, TFIIIC assembles the initiation complex TFIIIB-TFIIIC-tDNA, which is sufficient for RNA polymerase III recruitment and function. Part of the tauB domain of TFIIIC that binds boxB DNA promoter sites of tRNA and similar genes. Cooperates with TFC3 in DNA binding. The sequence is that of Transcription factor tau 91 kDa subunit (TFC6) from Saccharomyces cerevisiae (strain ATCC 204508 / S288c) (Baker's yeast).